A 104-amino-acid chain; its full sequence is Pterin-4-alpha-carbinolamine dehydratase (104 aa).

Ala-2 carries the N-acetylalanine modification. Residues 61–63 and 78–81 each bind substrate; these read DHH and STHE.

The protein belongs to the pterin-4-alpha-carbinolamine dehydratase family. In terms of assembly, homotetramer and homodimer. Heterotetramer with HNF1A; formed by a dimer of dimers. Interacts with HNF1B (via HNF-p1 domain); the interaction increases HNF1B transactivation activity.

Its subcellular location is the cytoplasm. It is found in the nucleus. The catalysed reaction is (4aS,6R)-4a-hydroxy-L-erythro-5,6,7,8-tetrahydrobiopterin = (6R)-L-erythro-6,7-dihydrobiopterin + H2O. Its function is as follows. Involved in tetrahydrobiopterin biosynthesis. Seems to both prevent the formation of 7-pterins and accelerate the formation of quinonoid-BH2. Coactivator for HNF1A-dependent transcription. Regulates the dimerization of homeodomain protein HNF1A and enhances its transcriptional activity. Also acts as a coactivator for HNF1B-dependent transcription. In Rattus norvegicus (Rat), this protein is Pterin-4-alpha-carbinolamine dehydratase (Pcbd1).